The chain runs to 271 residues: Proteasome inhibitor PI31 subunit (271 aa).

Ala-2 bears the N-acetylalanine mark. The important for homodimerization and interaction with FBXO7 stretch occupies residues 2-150 (AGLEVLFASA…PIHEQWEKAN (149 aa)). Ser-153 carries the phosphoserine modification. Arg-205 carries the omega-N-methylarginine modification. At Arg-219 the chain carries Asymmetric dimethylarginine. The interval 222-271 (IDPSSGLPNRLPPGAVPPGARFDPFGPIGTSPPGPNPDHLPPPGYDDMYL) is disordered. An Omega-N-methylarginine modification is found at Arg-231. Residues 251–265 (TSPPGPNPDHLPPPG) show a composition bias toward pro residues. Ser-252 carries the phosphoserine modification.

It belongs to the proteasome inhibitor PI31 family. As to quaternary structure, monomer and homodimer. Interacts with FBXO7.

It localises to the cytoplasm. It is found in the endoplasmic reticulum. In terms of biological role, plays an important role in control of proteasome function. Inhibits the hydrolysis of protein and peptide substrates by the 20S proteasome. Also inhibits the activation of the proteasome by the proteasome regulatory proteins PA700 and PA28. This chain is Proteasome inhibitor PI31 subunit (PSMF1), found in Pongo abelii (Sumatran orangutan).